A 189-amino-acid chain; its full sequence is MDPTQNTSAGIGGSNGTIRYQTNDGTSTVTVADDSKENLSQVINSIEKTLGVLHQLHLTVTSFTPASQLHLLQRLNSLVMELDNMTKLSEKCNIQIPMEVLNLIDDGKNPDEFTKDVLNSCIARNQVTKGKTDAFKDLRKHILEELEQNFPDEVDMYREIRASSAAVTKRLAQSQSVLPNGDAKVKNEL.

The interval methionine 1–threonine 22 is disordered.

Belongs to the Mediator complex subunit 10 family. In terms of assembly, component of the Mediator complex.

It is found in the nucleus. In terms of biological role, component of the Mediator complex, a coactivator involved in the regulated transcription of nearly all RNA polymerase II-dependent genes. Mediator functions as a bridge to convey information from gene-specific regulatory proteins to the basal RNA polymerase II transcription machinery. The Mediator complex, having a compact conformation in its free form, is recruited to promoters by direct interactions with regulatory proteins and serves for the assembly of a functional preinitiation complex with RNA polymerase II and the general transcription factors. The protein is Mediator of RNA polymerase II transcription subunit 10b (MED10B) of Arabidopsis thaliana (Mouse-ear cress).